Consider the following 131-residue polypeptide: Large ribosomal subunit protein bL17 (131 aa).

Belongs to the bacterial ribosomal protein bL17 family. As to quaternary structure, part of the 50S ribosomal subunit. Contacts protein L32.

This is Large ribosomal subunit protein bL17 from Shewanella frigidimarina (strain NCIMB 400).